The following is a 603-amino-acid chain: Cell division control protein 48 homolog B (603 aa).

Residues 63-70 and 327-334 contribute to the ATP site; these read GPPGTGKT and GPPGCSKT.

It belongs to the AAA ATPase family.

It localises to the nucleus. The protein resides in the cytoplasm. The protein localises to the cytoskeleton. It is found in the phragmoplast. Functionally, probably functions in cell division and growth processes. Interacts with certain SNAREs as part of specialized membrane fusion events where vesicles from the same organelle fuse (homotypic fusion). The protein is Cell division control protein 48 homolog B (CDC48B) of Arabidopsis thaliana (Mouse-ear cress).